A 588-amino-acid chain; its full sequence is Aspartate--tRNA ligase (588 aa).

Residue Glu174 coordinates L-aspartate. The segment at 198–201 (QLFK) is aspartate. Arg220 provides a ligand contact to L-aspartate. ATP is bound by residues 220–222 (RDE) and Gln229. An L-aspartate-binding site is contributed by His448. Glu482 lines the ATP pocket. L-aspartate is bound at residue Arg489. 534–537 (GIDR) serves as a coordination point for ATP.

The protein belongs to the class-II aminoacyl-tRNA synthetase family. Type 1 subfamily. In terms of assembly, homodimer.

It is found in the cytoplasm. It carries out the reaction tRNA(Asp) + L-aspartate + ATP = L-aspartyl-tRNA(Asp) + AMP + diphosphate. Catalyzes the attachment of L-aspartate to tRNA(Asp) in a two-step reaction: L-aspartate is first activated by ATP to form Asp-AMP and then transferred to the acceptor end of tRNA(Asp). The protein is Aspartate--tRNA ligase of Xanthomonas oryzae pv. oryzae (strain PXO99A).